The sequence spans 731 residues: SUN domain-containing protein 2 (731 aa).

Disordered stretches follow at residues Met-1–Ser-69 and Ser-106–Ser-142. The tract at residues Met-1–Leu-128 is LMNA-binding. Residues Met-1–Ser-226 lie on the Nuclear side of the membrane. The residue at position 12 (Ser-12) is a Phosphoserine. The segment covering Gly-18–Gly-33 has biased composition (low complexity). A phosphoserine mark is found at Ser-39 and Ser-55. A Phosphothreonine modification is found at Thr-117. 3 positions are modified to phosphoserine: Ser-120, Ser-123, and Ser-147. The helical transmembrane segment at Phe-227 to Phe-247 threads the bilayer. The Perinuclear space portion of the chain corresponds to Tyr-248 to His-731. Coiled coils occupy residues Gln-396–Glu-452 and Arg-486–Arg-519. The segment at Ala-521–His-731 is sufficient for interaction with SYNE1 and SYNE2. One can recognise an SUN domain in the interval Gly-569–Ala-730. Residue Asn-650 is glycosylated (N-linked (GlcNAc...) asparagine).

Core component of the LINC complex which is composed of inner nuclear membrane SUN domain-containing proteins coupled to outer nuclear membrane KASH domain-containing nesprins. SUN and KASH domain-containing proteins seem to bind each other promiscuously; however, differentially expression of LINC complex constituents is giving rise to specific assemblies. At least SUN1/2-containing core LINC complexes are proposed to be hexameric composed of three protomers of each KASH and SUN domain-containing protein. Interacts with SYNE2; the SUN2:SYNE2/KASH2 LINC complex is a heterohexamer; the homotrimeric cloverleave-like conformation of the SUN domain is a prerequisite for LINC complex formation in which three separate SYNE2/KASH2 peptides bind at the interface of adjacent SUN domains. Component of a probable SUN2:KASH5 LINC complex. Interacts with SYNE1 and SYNE3; probably forming respective LINC complexes. Interacts with A-type lamin. Interaction with lamins B1 and C is hardly detectable. Interacts with EMD. Interacts with RAB5A. Interacts with TMEM43 and TMEM201. Interacts with IRAG2. The disulfide bond with SYNE2 is required for stability of the SUN2:SYNE2/KASH2 LINC complex under tensile forces though not required for the interaction. The disulfide bond is proposed to be conserved in LINC complexes involved in force transmission. As to expression, highly expressed in heart, placenta and muscle.

It localises to the nucleus inner membrane. The protein resides in the nucleus envelope. It is found in the endosome membrane. As a component of the LINC (LInker of Nucleoskeleton and Cytoskeleton) complex, involved in the connection between the nuclear lamina and the cytoskeleton. The nucleocytoplasmic interactions established by the LINC complex play an important role in the transmission of mechanical forces across the nuclear envelope and in nuclear movement and positioning. Specifically, SYNE2 and SUN2 assemble in arrays of transmembrane actin-associated nuclear (TAN) lines which are bound to F-actin cables and couple the nucleus to retrograde actin flow during actin-dependent nuclear movement. Required for interkinetic nuclear migration (INM) and essential for nucleokinesis and centrosome-nucleus coupling during radial neuronal migration in the cerebral cortex and during glial migration. Required for nuclear migration in retinal photoreceptor progenitors implicating association with cytoplasmic dynein-dynactin and kinesin motor complexes, and probably B-type lamins; SUN1 and SUN2 seem to act redundantly. The SUN1/2:KASH5 LINC complex couples telomeres to microtubules during meiosis; SUN1 and SUN2 seem to act at least partial redundantly. Anchors chromosome movement in the prophase of meiosis and is involved in selective gene expression of coding and non-coding RNAs needed for gametogenesis. Required for telomere attachment to nuclear envelope and gametogenesis. May also function on endocytic vesicles as a receptor for Rab5-GDP and participate in the activation of Rab5. The sequence is that of SUN domain-containing protein 2 from Mus musculus (Mouse).